The chain runs to 273 residues: MMKRQFEDVTRIVIKIGTSSLVLPTGKINLEKIDQLAFVISSLMNKGKEVILVSSGAMGFGLDILKMEKRPTNLAKQQAVSSVGQVAMMSLYSQIFAHYQTNVSQILLTRDVVVFPESLANVTNAFESLISLGIVPIVNENDAVSVDEMDHATKFGDNDRLSAVVAGITKADLLIMLSDIDGLFDKNPTIYEDAQLRSHVAVITQEIIASAGGAGSKFGTGGMLSKVQSAQMVFENKGQMVLMNGANPRDVLRVLEGQPLGTWFKQIEEVTHD.

Lysine 15 lines the ATP pocket. Serine 55, aspartate 142, and asparagine 158 together coordinate substrate. Residues 178–179 (SD) and 220–226 (TGGMLSK) contribute to the ATP site.

It belongs to the glutamate 5-kinase family.

It localises to the cytoplasm. The catalysed reaction is L-glutamate + ATP = L-glutamyl 5-phosphate + ADP. The protein operates within amino-acid biosynthesis; L-proline biosynthesis; L-glutamate 5-semialdehyde from L-glutamate: step 1/2. Its function is as follows. Catalyzes the transfer of a phosphate group to glutamate to form L-glutamate 5-phosphate. The protein is Glutamate 5-kinase of Streptococcus pyogenes serotype M6 (strain ATCC BAA-946 / MGAS10394).